The chain runs to 216 residues: 2',3'-cyclic-nucleotide 3'-phosphodiesterase (216 aa).

Residue His-39 is the Proton donor/acceptor of the active site. Residue Thr-41 coordinates substrate. The active-site Proton donor/acceptor is His-153. Positions 155 and 158 each coordinate substrate.

Belongs to the 2H phosphoesterase superfamily. CPD1 family.

It is found in the golgi apparatus. The enzyme catalyses a nucleoside 2',3'-cyclic phosphate + H2O = a nucleoside 2'-phosphate + H(+). Involved in the metabolism of ADP-ribose 1',2'-cyclic phosphate which is produced as a consequence of tRNA splicing. In Yarrowia lipolytica (strain CLIB 122 / E 150) (Yeast), this protein is 2',3'-cyclic-nucleotide 3'-phosphodiesterase (CPD1).